We begin with the raw amino-acid sequence, 1237 residues long: Glutamate receptor ionotropic, NMDA 2C (1237 aa).

The signal sequence occupies residues 1–19 (MGGALGPALLLTSLLGAWA). Over 20–554 (RLGAGQGEQA…SAFLEPYSPA (535 aa)) the chain is Extracellular. N-linked (GlcNAc...) asparagine glycans are attached at residues N70 and N73. C82 and C317 are joined by a disulfide. Residues N337 and N438 are each glycosylated (N-linked (GlcNAc...) asparagine). Cystine bridges form between C426/C453 and C433/C454. Residues S509, T511, and R516 each coordinate L-glutamate. N539 is a glycosylation site (N-linked (GlcNAc...) asparagine). The chain crosses the membrane as a helical span at residues 555–575 (VWVMMFVMCLTVVAITVFMFE). Topologically, residues 576–601 (YFSPVSYNQNLTKGKKPGGPSFTIGK) are cytoplasmic. Residues 601-620 (KSVWLLWALVFNNSVPIENP) are pore-forming. Positions 602–611 (SVWLLWALVF) form an intramembrane region, discontinuously helical. The Cytoplasmic segment spans residues 612 to 622 (NNSVPIENPRG). The chain crosses the membrane as a helical span at residues 623 to 644 (TTSKIMVLVWAFFAVIFLASYT). The Extracellular portion of the chain corresponds to 645–813 (ANLAAFMIQE…EVMSSKLDID (169 aa)). The N-linked (GlcNAc...) asparagine glycan is linked to N685. L-glutamate is bound by residues S687, T688, and D729. The cysteines at positions 743 and 798 are disulfide-linked. Residues 814 to 833 (NMAGVFYMLLVAMGLALLVF) form a helical membrane-spanning segment. At 834 to 1237 (AWEHLVYWKL…RRVSSLESEV (404 aa)) the chain is on the cytoplasmic side. Phosphoserine occurs at positions 875, 881, and 912. A compositionally biased stretch (polar residues) spans 907-925 (ADVSSSLDRATRTIENWGN). Residues 907–990 (ADVSSSLDRA…LPDVSRPSCR (84 aa)) form a disordered region. Low complexity predominate over residues 930–941 (PAPTASGPRSST). Residues 968 to 982 (PQPPARPATCGPPLP) are compositionally biased toward pro residues. The short motif at 1235–1237 (SEV) is the PDZ-binding element.

This sequence belongs to the glutamate-gated ion channel (TC 1.A.10.1) family. NR2C/GRIN2C subfamily. In terms of assembly, heterotetramer. Forms heterotetrameric channels composed of two GluN1/zeta subunits (GRIN1), and two identical GluN2/epsilon subunits (GRIN2A, GRIN2B, GRIN2C or GRIN2D) or GluN3 subunits (GRIN3A or GRIN3B) (in vitro). In vivo, the subunit composition may depend on the expression levels of the different subunits. Interacts with PDZ domains of PATJ and DLG4. Interacts (via PDZ-binding motif) with SNX27 (via PDZ domain); the interaction is required for recycling to the plasma membrane when endocytosed and prevent degradation in lysosomes. Detected in cerebellum.

It localises to the cell membrane. The protein localises to the postsynaptic cell membrane. The enzyme catalyses Ca(2+)(in) = Ca(2+)(out). The catalysed reaction is Na(+)(in) = Na(+)(out). It catalyses the reaction K(+)(in) = K(+)(out). Component of N-methyl-D-aspartate (NMDA) receptors (NMDARs) that function as heterotetrameric, ligand-gated cation channels with high calcium permeability and voltage-dependent block by Mg(2+). Participates in synaptic plasticity for learning and memory formation by contributing to the slow phase of excitatory postsynaptic current and long-term synaptic potentiation. Channel activation requires binding of the neurotransmitter L-glutamate to the GluN2 subunit, glycine or D-serine binding to the GluN1 subunit, plus membrane depolarization to eliminate channel inhibition by Mg(2+). NMDARs mediate simultaneously the potasium efflux and the influx of calcium and sodium. Each GluN2 subunit confers differential attributes to channel properties, including activation, deactivation and desensitization kinetics, pH sensitivity, Ca2(+) permeability, and binding to allosteric modulators. The polypeptide is Glutamate receptor ionotropic, NMDA 2C (Rattus norvegicus (Rat)).